The primary structure comprises 4555 residues: Protocadherin Fat 3 (4555 aa).

Positions 1-31 are cleaved as a signal peptide; it reads MSVTMGHCMGTKPPSCIILLLLKLFATVSQG. Topologically, residues 32–4153 are extracellular; that stretch reads LPGTGPLGFH…AGHSYVGKEE (4122 aa). Cadherin domains follow at residues 43–157, 158–262, 263–374, 376–471, 472–577, 578–680, 726–830, 831–935, 936–1042, 1043–1147, 1148–1253, 1254–1358, 1362–1459, 1460–1565, 1566–1768, 1769–1882, 1883–1985, 1982–2083, 2084–2185, 2186–2286, 2287–2393, 2394–2495, 2496–2599, 2600–2707, 2708–2813, 2814–2923, 2924–3028, 3029–3130, 3131–3235, 3236–3340, 3341–3445, 3446–3550, and 3551–3660; these read THST…RPLF, SPTT…NEHA, PIIH…TPVR, EKDV…TPEF, QEAL…SPLF, EKVA…SKSF, KSFP…NPVF, LQDS…SPAF, IPSS…TPYF, PDFA…APLT, SEPI…RPQF, PEKV…SPIP, DEPF…GPEF, SQPH…SPYF, TNPL…PPVF, LFSQ…PPVF, TQAV…TQSF, TQSF…SPVF, VGLP…MPVF, DKPF…PPVF, DQPT…PPVF, NQLI…SPAF, SQST…APQF, MTVE…LPSF, TQSQ…KPVF, ETST…APVF, AHEV…SPVC, DQVA…PPVF, SSNH…PPVF, ERRD…PPRF, SQDV…SPVF, TPAN…KPTA, and IPLE…PEDF. Residue N48 is glycosylated (N-linked (GlcNAc...) asparagine). An N-linked (GlcNAc...) asparagine glycan is attached at N341. N-linked (GlcNAc...) asparagine glycosylation is found at N481, N562, N667, N799, N879, N898, and N1006. N-linked (GlcNAc...) asparagine glycans are attached at residues N1367 and N1429. N1751 is a glycosylation site (N-linked (GlcNAc...) asparagine). N-linked (GlcNAc...) asparagine glycosylation is found at N1944, N1993, and N1996. N-linked (GlcNAc...) asparagine glycans are attached at residues N2208, N2292, N2331, and N2467. N2734 carries an N-linked (GlcNAc...) asparagine glycan. N3000 carries an N-linked (GlcNAc...) asparagine glycan. N3201 is a glycosylation site (N-linked (GlcNAc...) asparagine). 3 N-linked (GlcNAc...) asparagine glycosylation sites follow: N3449, N3618, and N3741. The region spanning 3794 to 3832 is the EGF-like 1 domain; sequence SNDPCVEKPCPEDMQCVGYEASRRPFLCQCPPGKLGECS. 3 disulfide bridges follow: C3798/C3809, C3803/C3821, and C3823/C3831. One can recognise a Laminin G-like domain in the interval 3834–4017; sequence HTSLSFAGNS…VGLTELKLGC (184 aa). The N-linked (GlcNAc...) asparagine glycan is linked to N3926. 10 cysteine pairs are disulfide-bonded: C3984/C4017, C4024/C4035, C4029/C4045, C4047/C4056, C4063/C4074, C4068/C4083, C4085/C4094, C4101/C4112, C4106/C4121, and C4123/C4132. EGF-like domains are found at residues 4020–4057 and 4059–4095; these read YPDACQRSPCLHGGSCSSLPSGGYQCSCLSQFTGTNCE and EITACFPNPCRNGGSCDPIGNTFVCSCKAGLTGVTCE. Residues 4097–4133 enclose the EGF-like 4; calcium-binding domain; it reads DVDECEREECENGGSCVNLFGSFFCNCTPGYVGQYCG. The chain crosses the membrane as a helical span at residues 4154–4174; sequence LIGIAVVLFVIFTLIVLFIVF. Residues 4175–4555 lie on the Cytoplasmic side of the membrane; sequence RKKVFRKNYS…FVETQQQTQV (381 aa). Disordered stretches follow at residues 4300-4353 and 4395-4474; these read IRKN…YHWD and GGYD…LGGP. Residues 4322–4343 are compositionally biased toward polar residues; the sequence is CFTNSNKGSNSEVQSLSSFQSD. Omega-N-methylarginine occurs at positions 4508 and 4518.

As to expression, restricted to the nervous system, mainly in brain. In brain, it is highly expressed in the olfactory bulb and retina. In the developing olfactory bulb, it localizes along the dendrites of these cells as well as in their axons to some extent. In retina, it cocentrates in the inner plexiform layer throughout development (at protein level).

The protein localises to the membrane. Functionally, may play a role in the interactions between neurites derived from specific subsets of neurons during development. In Mus musculus (Mouse), this protein is Protocadherin Fat 3 (Fat3).